Reading from the N-terminus, the 246-residue chain is MIKVAVFGAKGRMGTAVCQAVEEAEDTELVAAVDSGGDRSDASGADVIVDFTTPDAVMDNLSWAISHDINTVVGTTGFDDERYQVLRDQLADHPNIGCLVAPNFSIGAVLMMHFAEQAARFYESAEIVELHHPNKVDAPSGTARTTATKIAAARQEAGLGEVPDATKSQLNGARGAVVEGVHVHSVRLRGLVAHQEVLFGAEGETLTIRHDSMDRVSFMSGVLTGVRGVLDRPGLTVGIEGLLGLE.

NAD(+) contacts are provided by residues 8-13, 74-76, and 101-104; these read GAKGRM, GTT, and APNF. Residue histidine 131 is the Proton donor/acceptor of the active site. (S)-2,3,4,5-tetrahydrodipicolinate is bound at residue histidine 132. The active-site Proton donor is lysine 135. Position 141–142 (141–142) interacts with (S)-2,3,4,5-tetrahydrodipicolinate; it reads GT.

It belongs to the DapB family.

It is found in the cytoplasm. The catalysed reaction is (S)-2,3,4,5-tetrahydrodipicolinate + NAD(+) + H2O = (2S,4S)-4-hydroxy-2,3,4,5-tetrahydrodipicolinate + NADH + H(+). The enzyme catalyses (S)-2,3,4,5-tetrahydrodipicolinate + NADP(+) + H2O = (2S,4S)-4-hydroxy-2,3,4,5-tetrahydrodipicolinate + NADPH + H(+). Its pathway is amino-acid biosynthesis; L-lysine biosynthesis via DAP pathway; (S)-tetrahydrodipicolinate from L-aspartate: step 4/4. Its function is as follows. Catalyzes the conversion of 4-hydroxy-tetrahydrodipicolinate (HTPA) to tetrahydrodipicolinate. This chain is 4-hydroxy-tetrahydrodipicolinate reductase, found in Cutibacterium acnes (strain DSM 16379 / KPA171202) (Propionibacterium acnes).